The primary structure comprises 107 residues: Probable monothiol glutaredoxin 2 (107 aa).

One can recognise a Glutaredoxin domain in the interval 7–107 (LEFIQNAIKK…LEKMLKDVVV (101 aa)). K24 is a glutathione binding site. [2Fe-2S] cluster is bound at residue C32. Glutathione contacts are provided by residues R61, F73, and 86–87 (CD).

Belongs to the glutaredoxin family. Monothiol subfamily.

In Rickettsia prowazekii (strain Madrid E), this protein is Probable monothiol glutaredoxin 2 (grxC2).